The following is a 192-amino-acid chain: Protein Syd (192 aa).

It belongs to the Syd family.

The protein localises to the cell inner membrane. In terms of biological role, interacts with the SecY protein in vivo. May bind preferentially to an uncomplexed state of SecY, thus functioning either as a chelating agent for excess SecY in the cell or as a regulatory factor that negatively controls the translocase function. This Hahella chejuensis (strain KCTC 2396) protein is Protein Syd.